A 342-amino-acid polypeptide reads, in one-letter code: Farnesyl pyrophosphate synthase (342 aa).

Isopentenyl diphosphate contacts are provided by K47, R50, and Q86. Mg(2+) is bound by residues D93 and D97. R102 is a dimethylallyl diphosphate binding site. Isopentenyl diphosphate is bound at residue R103. Residues K190, T191, Q229, K246, and K255 each contribute to the dimethylallyl diphosphate site.

Belongs to the FPP/GGPP synthase family. As to quaternary structure, homodimer. It depends on Mg(2+) as a cofactor. In terms of tissue distribution, mostly expressed in roots and seeds, and to a lower extent, in leaves and stems.

It localises to the cytoplasm. The catalysed reaction is isopentenyl diphosphate + dimethylallyl diphosphate = (2E)-geranyl diphosphate + diphosphate. It catalyses the reaction isopentenyl diphosphate + (2E)-geranyl diphosphate = (2E,6E)-farnesyl diphosphate + diphosphate. The protein operates within isoprenoid biosynthesis; farnesyl diphosphate biosynthesis; farnesyl diphosphate from geranyl diphosphate and isopentenyl diphosphate: step 1/1. It functions in the pathway isoprenoid biosynthesis; geranyl diphosphate biosynthesis; geranyl diphosphate from dimethylallyl diphosphate and isopentenyl diphosphate: step 1/1. Its activity is regulated as follows. Stimulated by methyl jasmonate (MeJA). Its function is as follows. Catalyzes the sequential condensation of isopentenyl pyrophosphate with the allylic pyrophosphates, dimethylallyl pyrophosphate, and then with the resultant geranylpyrophosphate to the ultimate product farnesyl pyrophosphate. Component of the triterpene saponins (e.g. ginsenosides or panaxosides) and phytosterols biosynthetic pathways. Promotes the accumulation of ginsenosides. The chain is Farnesyl pyrophosphate synthase from Panax ginseng (Korean ginseng).